We begin with the raw amino-acid sequence, 258 residues long: Imidazole glycerol phosphate synthase subunit HisF (258 aa).

Catalysis depends on residues Asp-11 and Asp-130.

The protein belongs to the HisA/HisF family. In terms of assembly, heterodimer of HisH and HisF.

The protein resides in the cytoplasm. It catalyses the reaction 5-[(5-phospho-1-deoxy-D-ribulos-1-ylimino)methylamino]-1-(5-phospho-beta-D-ribosyl)imidazole-4-carboxamide + L-glutamine = D-erythro-1-(imidazol-4-yl)glycerol 3-phosphate + 5-amino-1-(5-phospho-beta-D-ribosyl)imidazole-4-carboxamide + L-glutamate + H(+). The protein operates within amino-acid biosynthesis; L-histidine biosynthesis; L-histidine from 5-phospho-alpha-D-ribose 1-diphosphate: step 5/9. IGPS catalyzes the conversion of PRFAR and glutamine to IGP, AICAR and glutamate. The HisF subunit catalyzes the cyclization activity that produces IGP and AICAR from PRFAR using the ammonia provided by the HisH subunit. The polypeptide is Imidazole glycerol phosphate synthase subunit HisF (Edwardsiella ictaluri (strain 93-146)).